We begin with the raw amino-acid sequence, 280 residues long: Ribonuclease Z (280 aa).

Positions 61, 63, 65, 66, 153, 176, and 240 each coordinate Zn(2+). The active-site Proton acceptor is Asp-65.

Belongs to the RNase Z family. As to quaternary structure, homodimer. Zn(2+) serves as cofactor.

It carries out the reaction Endonucleolytic cleavage of RNA, removing extra 3' nucleotides from tRNA precursor, generating 3' termini of tRNAs. A 3'-hydroxy group is left at the tRNA terminus and a 5'-phosphoryl group is left at the trailer molecule.. Its function is as follows. Zinc phosphodiesterase, which displays some tRNA 3'-processing endonuclease activity. Probably involved in tRNA maturation, by removing a 3'-trailer from precursor tRNA. This chain is Ribonuclease Z, found in Mycobacterium bovis (strain BCG / Pasteur 1173P2).